The primary structure comprises 134 residues: Aspartate 1-decarboxylase (134 aa).

The active-site Schiff-base intermediate with substrate; via pyruvic acid is S25. S25 bears the Pyruvic acid (Ser) mark. T57 provides a ligand contact to substrate. Y58 functions as the Proton donor in the catalytic mechanism. Substrate is bound at residue 73-75 (GAA).

Belongs to the PanD family. Heterooctamer of four alpha and four beta subunits. It depends on pyruvate as a cofactor. In terms of processing, is synthesized initially as an inactive proenzyme, which is activated by self-cleavage at a specific serine bond to produce a beta-subunit with a hydroxyl group at its C-terminus and an alpha-subunit with a pyruvoyl group at its N-terminus.

Its subcellular location is the cytoplasm. It catalyses the reaction L-aspartate + H(+) = beta-alanine + CO2. The protein operates within cofactor biosynthesis; (R)-pantothenate biosynthesis; beta-alanine from L-aspartate: step 1/1. Catalyzes the pyruvoyl-dependent decarboxylation of aspartate to produce beta-alanine. The polypeptide is Aspartate 1-decarboxylase (Geobacter sp. (strain M21)).